We begin with the raw amino-acid sequence, 75 residues long: Large ribosomal subunit protein bL31 (75 aa).

Belongs to the bacterial ribosomal protein bL31 family. Type A subfamily. In terms of assembly, part of the 50S ribosomal subunit.

Binds the 23S rRNA. In Chlorobium phaeobacteroides (strain BS1), this protein is Large ribosomal subunit protein bL31.